Consider the following 109-residue polypeptide: Large ribosomal subunit protein uL24 (109 aa).

It belongs to the universal ribosomal protein uL24 family. As to quaternary structure, part of the 50S ribosomal subunit.

Functionally, one of two assembly initiator proteins, it binds directly to the 5'-end of the 23S rRNA, where it nucleates assembly of the 50S subunit. One of the proteins that surrounds the polypeptide exit tunnel on the outside of the subunit. This is Large ribosomal subunit protein uL24 from Desulforapulum autotrophicum (strain ATCC 43914 / DSM 3382 / VKM B-1955 / HRM2) (Desulfobacterium autotrophicum).